The primary structure comprises 493 residues: Glycerol kinase (493 aa).

T12 provides a ligand contact to ADP. T12, T13, and S14 together coordinate ATP. T12 contacts sn-glycerol 3-phosphate. R16 serves as a coordination point for ADP. Positions 82, 83, 132, and 239 each coordinate sn-glycerol 3-phosphate. 5 residues coordinate glycerol: R82, E83, Y132, D239, and Q240. 2 residues coordinate ADP: T261 and G303. T261, G303, Q307, and G402 together coordinate ATP. ADP contacts are provided by G402 and N406.

It belongs to the FGGY kinase family.

The enzyme catalyses glycerol + ATP = sn-glycerol 3-phosphate + ADP + H(+). Its pathway is polyol metabolism; glycerol degradation via glycerol kinase pathway; sn-glycerol 3-phosphate from glycerol: step 1/1. Its function is as follows. Key enzyme in the regulation of glycerol uptake and metabolism. Catalyzes the phosphorylation of glycerol to yield sn-glycerol 3-phosphate. This chain is Glycerol kinase, found in Thermococcus onnurineus (strain NA1).